We begin with the raw amino-acid sequence, 428 residues long: Exodeoxyribonuclease 7 large subunit (428 aa).

It belongs to the XseA family. In terms of assembly, heterooligomer composed of large and small subunits.

It is found in the cytoplasm. The enzyme catalyses Exonucleolytic cleavage in either 5'- to 3'- or 3'- to 5'-direction to yield nucleoside 5'-phosphates.. Bidirectionally degrades single-stranded DNA into large acid-insoluble oligonucleotides, which are then degraded further into small acid-soluble oligonucleotides. This chain is Exodeoxyribonuclease 7 large subunit, found in Mycobacterium leprae (strain TN).